The primary structure comprises 89 residues: uncharacterized protein (89 aa).

Residues 39 to 61 form a helical membrane-spanning segment; the sequence is FVCFWSIWFWTGDISFSLLSMLV.

The protein localises to the membrane. This is an uncharacterized protein from Saccharomyces cerevisiae (strain ATCC 204508 / S288c) (Baker's yeast).